The sequence spans 497 residues: 3-ketoacyl-CoA synthase 6 (497 aa).

2 consecutive transmembrane segments (helical) span residues 25–45 and 64–84; these read LVNH…AVEL and LVQV…YFMS. The FAE domain maps to 81-370; sequence YFMSKPRTIY…FLTSLIGRKI (290 aa). Residues Cys225, His304, His388, His392, His421, and Asn425 contribute to the active site.

Belongs to the thiolase-like superfamily. Chalcone/stilbene synthases family. In terms of tissue distribution, in epidermal cells of aerial tissues and in the tapetum of anthers near maturity. Expressed in siliques, flowers and leaves.

It is found in the endoplasmic reticulum membrane. It carries out the reaction a very-long-chain acyl-CoA + malonyl-CoA + H(+) = a very-long-chain 3-oxoacyl-CoA + CO2 + CoA. It participates in lipid metabolism; fatty acid biosynthesis. Its activity is regulated as follows. Strongly inhibited by metazachlor and mefluidide. In terms of biological role, contributes to cuticular wax and suberin biosynthesis. Involved in both decarbonylation and acyl-reduction wax synthesis pathways. Required for elongation of C24 fatty acids, an essential step of the cuticular wax production. Major condensing enzyme for stem wax and pollen coat lipid biosynthesis. In Arabidopsis thaliana (Mouse-ear cress), this protein is 3-ketoacyl-CoA synthase 6.